Here is a 133-residue protein sequence, read N- to C-terminus: T-cell receptor beta chain V region 86T1 (133 aa).

The signal sequence occupies residues 1 to 21 (MSCRLLLYVSLCLVETALMNT). Residues 22–113 (KITQSPRYLI…SAVYFCASSH (92 aa)) are v segment. N-linked (GlcNAc...) asparagine glycans are attached at residues Asn36 and Asn75. Cysteines 41 and 109 form a disulfide. A j segment region spans residues 114 to 133 (GQGVSGNTLYFGEGSRLIVV).

The sequence is that of T-cell receptor beta chain V region 86T1 from Mus musculus (Mouse).